Here is an 83-residue protein sequence, read N- to C-terminus: MRKGIHPDYQEVVFMDSATGAKFVAGSTLKPEETIEFEGKTYPLVRVEISSDSHPFYTGKQKFAQADGRIEKFNKKYGMSSKN.

It belongs to the bacterial ribosomal protein bL31 family. Type B subfamily. In terms of assembly, part of the 50S ribosomal subunit.

The protein is Large ribosomal subunit protein bL31B of Lactobacillus johnsonii (strain CNCM I-12250 / La1 / NCC 533).